The sequence spans 1578 residues: FERM and PDZ domain-containing protein 1 (1578 aa).

Residues 57 to 135 form the PDZ domain; sequence TVKIDKDTLL…SLSITVVRCT (79 aa). The FERM domain occupies 181-496; that stretch reads NVLKLYLENG…GYYRLLVDPV (316 aa). Disordered regions lie at residues 555 to 616, 720 to 743, and 759 to 831; these read KEEQ…EEDD, SDSSESTASRQGGAPPAWGQQGWT, and PLAF…VKKY. Over residues 720–729 the composition is skewed to polar residues; that stretch reads SDSSESTASR. The segment covering 730-742 has biased composition (low complexity); the sequence is QGGAPPAWGQQGW. Positions 793 to 811 are enriched in polar residues; it reads AEPSATSLQNKASTSSPEN. The span at 822-831 shows a compositional bias: basic residues; sequence PSRRGGVKKY. Positions 924-931 are important for interaction with GPSM2; that stretch reads EPETMETK. 3 disordered regions span residues 950–1030, 1070–1194, and 1347–1374; these read PNNK…LASN, KYTE…QGCQ, and PQPETEEEDRDLEAHPMAPLTSPPSAGS. Over residues 968 to 986 the composition is skewed to polar residues; it reads TPHCSNPGSSGPDTAQARP. Positions 1100–1117 are enriched in basic and acidic residues; sequence TKEEPQGQLSLERDREVT. A compositionally biased stretch (polar residues) spans 1139 to 1150; sequence DVSNNVSQTLDI.

Interacts with GPSM1. Interacts with GPSM2 (via TPR repeat region).

It localises to the cytoplasm. The protein resides in the cytosol. The protein localises to the cell membrane. Functionally, stabilizes membrane-bound GPSM1, and thereby promotes its interaction with GNAI1. This chain is FERM and PDZ domain-containing protein 1 (FRMPD1), found in Homo sapiens (Human).